The sequence spans 533 residues: Hydroxylamine reductase (533 aa).

4 residues coordinate [4Fe-4S] cluster: Cys-3, Cys-6, Cys-15, and Cys-21. 8 residues coordinate hybrid [4Fe-2O-2S] cluster: His-234, Glu-258, Cys-302, Cys-389, Cys-417, Cys-442, Glu-476, and Lys-478. Cys-389 carries the post-translational modification Cysteine persulfide.

The protein belongs to the HCP family. Requires [4Fe-4S] cluster as cofactor. The cofactor is hybrid [4Fe-2O-2S] cluster.

The protein localises to the cytoplasm. The catalysed reaction is A + NH4(+) + H2O = hydroxylamine + AH2 + H(+). Catalyzes the reduction of hydroxylamine to form NH(3) and H(2)O. The chain is Hydroxylamine reductase from Maridesulfovibrio salexigens (strain ATCC 14822 / DSM 2638 / NCIMB 8403 / VKM B-1763) (Desulfovibrio salexigens).